Consider the following 345-residue polypeptide: Eukaryotic translation initiation factor 3 subunit F (345 aa).

One can recognise an MPN domain in the interval Val-30–Gly-166. The tract at residues Gly-308–Ala-345 is disordered. The span at Gln-318 to Gly-331 shows a compositional bias: gly residues. The segment covering Thr-335 to Ala-345 has biased composition (basic and acidic residues).

The protein belongs to the eIF-3 subunit F family. In terms of assembly, component of the eukaryotic translation initiation factor 3 (eIF-3) complex.

It localises to the cytoplasm. Functionally, component of the eukaryotic translation initiation factor 3 (eIF-3) complex, which is involved in protein synthesis of a specialized repertoire of mRNAs and, together with other initiation factors, stimulates binding of mRNA and methionyl-tRNAi to the 40S ribosome. The eIF-3 complex specifically targets and initiates translation of a subset of mRNAs involved in cell proliferation. In Aspergillus oryzae (strain ATCC 42149 / RIB 40) (Yellow koji mold), this protein is Eukaryotic translation initiation factor 3 subunit F.